A 391-amino-acid polypeptide reads, in one-letter code: MYITDNETKKALLIFTDIFSGPASNSHISRSTLQEKSAKALKEIEEKELKSLVETIFLKPLSSLRFRIAKENPATLVGSGQLEKIAQAIEEEGADLVVFNSAVSPRIQRNLEAALNTCVIDRSEVIIQIFADRAQTREAVLQAELARLEYSMPRLTRRWTSLAQQRGGAKGTRGASRGAGEKKLELDRRRLKTEITKLKKEVERVRLQRSEQRKTRLNGDKKIGAIVGYTNAGKSSLLKKLSGAEVFTEDKLFATLDAETRKVFLQTGEKNIQILLTDTVGFVSNLPHQLIDAFRSTLEEAALADFLIIVCDAAHPAMPECLEVTKKVLDELSCSDKPSIIAINKMDDIFDEAQLLNLKERYPEAVEISVTTGQGLEGLKKKITDIIIFDK.

The disordered stretch occupies residues 162 to 181 (LAQQRGGAKGTRGASRGAGE). Positions 222 to 391 (KIGAIVGYTN…KITDIIIFDK (170 aa)) constitute a Hflx-type G domain. GTP is bound by residues 228–235 (GYTNAGKS), 253–257 (FATLD), 278–281 (DTVG), 344–347 (NKMD), and 369–371 (SVT). Ser-235 and Thr-255 together coordinate Mg(2+).

It belongs to the TRAFAC class OBG-HflX-like GTPase superfamily. HflX GTPase family. In terms of assembly, monomer. Associates with the 50S ribosomal subunit. Mg(2+) is required as a cofactor.

The protein localises to the cytoplasm. In terms of biological role, GTPase that associates with the 50S ribosomal subunit and may have a role during protein synthesis or ribosome biogenesis. In Treponema denticola (strain ATCC 35405 / DSM 14222 / CIP 103919 / JCM 8153 / KCTC 15104), this protein is GTPase HflX.